Reading from the N-terminus, the 121-residue chain is Large ribosomal subunit protein uL18 (121 aa).

It belongs to the universal ribosomal protein uL18 family. As to quaternary structure, part of the 50S ribosomal subunit; part of the 5S rRNA/L5/L18/L25 subcomplex. Contacts the 5S and 23S rRNAs.

Functionally, this is one of the proteins that bind and probably mediate the attachment of the 5S RNA into the large ribosomal subunit, where it forms part of the central protuberance. The chain is Large ribosomal subunit protein uL18 from Acidovorax ebreus (strain TPSY) (Diaphorobacter sp. (strain TPSY)).